A 671-amino-acid chain; its full sequence is Zinc finger protein 568 (671 aa).

The disordered stretch occupies residues Met-1–Ser-31. The span at Ser-18 to Arg-29 shows a compositional bias: basic and acidic residues. 2 consecutive KRAB domains span residues Val-34–Pro-105 and Leu-124–Pro-195. The tract at residues Glu-214 to Lys-366 is disordered. Composition is skewed to basic and acidic residues over residues Glu-226–Leu-251, Ile-296–Gln-312, and Arg-329–Lys-341. 11 C2H2-type zinc fingers span residues His-363–His-385, Tyr-391–His-413, Phe-419–His-441, His-447–His-469, Phe-475–His-497, His-503–His-525, Tyr-531–His-553, Tyr-559–His-581, His-587–His-609, Tyr-615–His-637, and Tyr-643–His-665.

Belongs to the krueppel C2H2-type zinc-finger protein family. Interacts with TRIM28. In terms of tissue distribution, little or no expression detected in most adult tissues (brain, liver, kidney, spleen, testis, ovary). In the hippocampus, detected in neural stem cells within the subventricular zone and subgranular zone.

It is found in the nucleus. In terms of biological role, has transcriptional repression activity, partially through the recruitment of the corepressor TRIM28 but also has repression activity independently of this interaction. Essential during embryonic development, where it acts as direct repressor of IGF2-P0, placental-specific transcript of IGF2, in early development and regulates convergent extension movements required for axis elongation and tissue morphogenesis in all germ layers. Also important for normal morphogenesis of extraembryonic tissues including the yolk sac, extraembryonic mesoderm and placenta. May enhance proliferation or maintenance of neural stem cells. The chain is Zinc finger protein 568 from Mus musculus (Mouse).